The following is a 356-amino-acid chain: UDP-N-acetylglucosamine--N-acetylmuramyl-(pentapeptide) pyrophosphoryl-undecaprenol N-acetylglucosamine transferase (356 aa).

Residues 13-15 (TGG), Asn-125, Arg-161, Ser-189, Ile-243, and Gln-288 contribute to the UDP-N-acetyl-alpha-D-glucosamine site.

The protein belongs to the glycosyltransferase 28 family. MurG subfamily.

It is found in the cell inner membrane. It catalyses the reaction di-trans,octa-cis-undecaprenyl diphospho-N-acetyl-alpha-D-muramoyl-L-alanyl-D-glutamyl-meso-2,6-diaminopimeloyl-D-alanyl-D-alanine + UDP-N-acetyl-alpha-D-glucosamine = di-trans,octa-cis-undecaprenyl diphospho-[N-acetyl-alpha-D-glucosaminyl-(1-&gt;4)]-N-acetyl-alpha-D-muramoyl-L-alanyl-D-glutamyl-meso-2,6-diaminopimeloyl-D-alanyl-D-alanine + UDP + H(+). The protein operates within cell wall biogenesis; peptidoglycan biosynthesis. Cell wall formation. Catalyzes the transfer of a GlcNAc subunit on undecaprenyl-pyrophosphoryl-MurNAc-pentapeptide (lipid intermediate I) to form undecaprenyl-pyrophosphoryl-MurNAc-(pentapeptide)GlcNAc (lipid intermediate II). In Cupriavidus metallidurans (strain ATCC 43123 / DSM 2839 / NBRC 102507 / CH34) (Ralstonia metallidurans), this protein is UDP-N-acetylglucosamine--N-acetylmuramyl-(pentapeptide) pyrophosphoryl-undecaprenol N-acetylglucosamine transferase.